We begin with the raw amino-acid sequence, 479 residues long: NADH-quinone oxidoreductase subunit N 2 (479 aa).

The next 14 helical transmembrane spans lie at 9-29, 40-60, 75-95, 110-130, 131-151, 164-184, 206-226, 238-258, 272-292, 299-319, 326-346, 371-391, 404-424, and 449-469; these read WALASVPEIIVVTGACVLLIV, LLLWASVAIVLLAAVATLMLA, RFAVFFKLVFYLATILTFFLS, YVLLLFALVGMMIMASAIDLL, SIYVGLELMVLCTYVLTGFLR, VILGAVSTAIFLYGVSLIYGL, LLLAVVFIVAGLVFKIGAVPF, PTTITAFMSVAPKAAGFAVIL, WIIVAAIAVATMALGSFVALV, LLAYSSIAHAGFAIFGVVAGG, VMLYLLIYTFMNLGIFGAVIM, ALLMLLYLFSLAGIPPTAGFF, GFVALAVIAVLLSVVSAYFYI, and ATLAFTAAGTIGIGLFPAWFL.

It belongs to the complex I subunit 2 family. As to quaternary structure, NDH-1 is composed of 14 different subunits. Subunits NuoA, H, J, K, L, M, N constitute the membrane sector of the complex.

It localises to the cell inner membrane. The enzyme catalyses a quinone + NADH + 5 H(+)(in) = a quinol + NAD(+) + 4 H(+)(out). In terms of biological role, NDH-1 shuttles electrons from NADH, via FMN and iron-sulfur (Fe-S) centers, to quinones in the respiratory chain. The immediate electron acceptor for the enzyme in this species is believed to be ubiquinone. Couples the redox reaction to proton translocation (for every two electrons transferred, four hydrogen ions are translocated across the cytoplasmic membrane), and thus conserves the redox energy in a proton gradient. This is NADH-quinone oxidoreductase subunit N 2 from Rhizobium meliloti (strain 1021) (Ensifer meliloti).